We begin with the raw amino-acid sequence, 454 residues long: Divalent metal cation transporter MntH (454 aa).

Positions 1–21 are disordered; sequence MSDAEATAPRSSWRFAGRDED. The next 11 membrane-spanning stretches (helical) occupy residues 45-65, 78-98, 122-142, 153-173, 182-202, 220-240, 275-295, 312-332, 368-388, 389-409, and 426-446; these read LFAFMGPGYMVSVGYMDPGNW, TLLFVIMLSNLMAILLQALAA, FVLWIACELAIIACDLAEVIG, IPLIGGAILTALDAFLVLLLM, AFVIALLIIIFSCFAIQIFVA, IVTNPAMLYIAIGIIGATVMP, IALMLALFVNAAILIVSAVAF, LLSPLLGLGIASILFAVALLA, GLAIVPVVVVTALYGEKGTGQ, LLVFSQVILSMQLPFAVVPLV, and GVAALAWVVAAIILVLNFKLL.

The protein belongs to the NRAMP family.

The protein localises to the cell inner membrane. Its function is as follows. H(+)-stimulated, divalent metal cation uptake system. This is Divalent metal cation transporter MntH from Mesorhizobium japonicum (strain LMG 29417 / CECT 9101 / MAFF 303099) (Mesorhizobium loti (strain MAFF 303099)).